Consider the following 279-residue polypeptide: Small ribosomal subunit protein uS2 (279 aa).

The protein belongs to the universal ribosomal protein uS2 family. In terms of assembly, component of the small ribosomal subunit. Mature ribosomes consist of a small (40S) and a large (60S) subunit. The 40S subunit contains about 33 different proteins and 1 molecule of RNA (18S). The 60S subunit contains about 49 different proteins and 3 molecules of RNA (25S, 5.8S and 5S). Interacts with ribosomal protein S21.

It localises to the cytoplasm. Functionally, required for the assembly and/or stability of the 40S ribosomal subunit. Required for the processing of the 20S rRNA-precursor to mature 18S rRNA in a late step of the maturation of 40S ribosomal subunits. The protein is Small ribosomal subunit protein uS2 of Chlamydomonas reinhardtii (Chlamydomonas smithii).